The primary structure comprises 421 residues: Putative B3 domain-containing protein Os08g0333500 (421 aa).

Residues 1–51 constitute a DNA-binding region (TF-B3); the sequence is MTVELEKIAGSFFISKGWKTFVHRTGLLSGQYIRFQVLTPSKINVLLFDKK. Positions 92 to 121 are disordered; it reads SHTSNKETSSDSRTESMTDIPSSSDNSGET. Over residues 95 to 107 the composition is skewed to basic and acidic residues; sequence SNKETSSDSRTES. A compositionally biased stretch (polar residues) spans 108-121; it reads MTDIPSSSDNSGET.

The protein localises to the nucleus. This chain is Putative B3 domain-containing protein Os08g0333500, found in Oryza sativa subsp. japonica (Rice).